The following is a 1102-amino-acid chain: ATP-dependent DNA helicase MPH1 (1102 aa).

Residues 19 to 55 (ALDKPATSGLHSREQEQQRDISNATPHTSTDLELEDF) form a disordered region. Residues 38-49 (DISNATPHTSTD) show a composition bias toward polar residues. One can recognise a Helicase ATP-binding domain in the interval 147–315 (IVKNGLFNNT…DVIDNLGVSH (169 aa)). 160-167 (LPTGLGKT) is a binding site for ATP. Residues 263–266 (DEAH) carry the DEAH box motif. The region spanning 490–651 (NLLNYFMDAG…GSRFNFRHDL (162 aa)) is the Helicase C-terminal domain. Disordered stretches follow at residues 672-702 (PIEN…FNMP), 720-743 (ASKT…DEIS), 818-837 (SQGI…KSRY), and 858-1102 (SGRK…SESG). Positions 687–699 (RSTRGKKASKKKF) are enriched in basic residues. The span at 822–837 (ETRHTKPHGDTDKSRY) shows a compositional bias: basic and acidic residues. The span at 1003-1019 (SSGAASKSGSTASTAAK) shows a compositional bias: low complexity. Residues 1069–1082 (SDDDDDDNDDEDDV) show a composition bias toward acidic residues.

Belongs to the DEAD box helicase family. DEAH subfamily. FANCM sub-subfamily. In terms of assembly, interacts with the MHF histone-fold complex to form the FANCM-MHF complex.

The protein resides in the nucleus. It carries out the reaction ATP + H2O = ADP + phosphate + H(+). Functionally, ATP-dependent DNA helicase involved in DNA damage repair by homologous recombination and in genome maintenance. Capable of unwinding D-loops. Plays a role in limiting crossover recombinants during mitotic DNA double-strand break (DSB) repair. Component of a FANCM-MHF complex which promotes gene conversion at blocked replication forks, probably by reversal of the stalled fork. The protein is ATP-dependent DNA helicase MPH1 of Pyricularia oryzae (strain 70-15 / ATCC MYA-4617 / FGSC 8958) (Rice blast fungus).